We begin with the raw amino-acid sequence, 310 residues long: p-hydroxybenzoic acid efflux pump subunit AaeA (310 aa).

The chain crosses the membrane as a helical span at residues 12–32 (AITLVLVILAFIAIFRAWVYY).

This sequence belongs to the membrane fusion protein (MFP) (TC 8.A.1) family.

The protein localises to the cell inner membrane. Its function is as follows. Forms an efflux pump with AaeB. This is p-hydroxybenzoic acid efflux pump subunit AaeA from Salmonella arizonae (strain ATCC BAA-731 / CDC346-86 / RSK2980).